A 283-amino-acid chain; its full sequence is Bifunctional protein FolD (283 aa).

NADP(+)-binding positions include 164–166 (GRS), serine 189, and isoleucine 230.

The protein belongs to the tetrahydrofolate dehydrogenase/cyclohydrolase family. As to quaternary structure, homodimer.

It carries out the reaction (6R)-5,10-methylene-5,6,7,8-tetrahydrofolate + NADP(+) = (6R)-5,10-methenyltetrahydrofolate + NADPH. It catalyses the reaction (6R)-5,10-methenyltetrahydrofolate + H2O = (6R)-10-formyltetrahydrofolate + H(+). It participates in one-carbon metabolism; tetrahydrofolate interconversion. Catalyzes the oxidation of 5,10-methylenetetrahydrofolate to 5,10-methenyltetrahydrofolate and then the hydrolysis of 5,10-methenyltetrahydrofolate to 10-formyltetrahydrofolate. The protein is Bifunctional protein FolD of Lactobacillus delbrueckii subsp. bulgaricus (strain ATCC BAA-365 / Lb-18).